A 142-amino-acid polypeptide reads, in one-letter code: Large ribosomal subunit protein uL13 (142 aa).

Belongs to the universal ribosomal protein uL13 family. As to quaternary structure, part of the 50S ribosomal subunit.

In terms of biological role, this protein is one of the early assembly proteins of the 50S ribosomal subunit, although it is not seen to bind rRNA by itself. It is important during the early stages of 50S assembly. The polypeptide is Large ribosomal subunit protein uL13 (Shewanella amazonensis (strain ATCC BAA-1098 / SB2B)).